Consider the following 274-residue polypeptide: Kit ligand (274 aa).

The N-terminal stretch at M1–T25 is a signal peptide. Over K26–Q215 the chain is Extracellular. 2 disulfides stabilise this stretch: C29–C114 and C68–C164. N90, N97, N145, and N196 each carry an N-linked (GlcNAc...) asparagine glycan. The helical transmembrane segment at W216–W238 threads the bilayer. Residues K239–V274 lie on the Cytoplasmic side of the membrane.

Belongs to the SCF family. In terms of assembly, homodimer, non-covalently linked. A soluble form is produced by proteolytic processing of isoform 1 in the extracellular domain.

The protein localises to the cell membrane. It localises to the secreted. Its subcellular location is the cytoplasm. The protein resides in the cytoskeleton. It is found in the cell projection. The protein localises to the lamellipodium. It localises to the filopodium. In terms of biological role, stimulates the proliferation of mast cells. Able to augment the proliferation of both myeloid and lymphoid hematopoietic progenitors in bone marrow culture. Also mediates cell-cell adhesion. Acts synergistically with other cytokines, probably interleukins. This chain is Kit ligand (KITLG), found in Felis catus (Cat).